A 492-amino-acid polypeptide reads, in one-letter code: MNTQHSKTDVILIGGGIMSATLGTLLKELTPEKDIQLFERLSQPGEESSNVWNNAGTGHSALCELNYTKEGKDGSVDITKAIHINEQFQLSKQFWAYLIREGHIESPDKFIQSVPHMSFVKGEENVKFLKSRVASLQKNVLFEKMKISQDPEKINSWVPLMMEGRQSDEAIAITYDETGTDVNFGALTKKLIANLQQKNVGINYKHEVLDIKKLNNGNWQVVVKDLNTSNVMNYESKFVFIGAGGASLPLLQKTKIKESKHIGGFPVSGLFLRCKNPDVIHRHHAKVYGKAEVGAPPMSVPHLDTRFVNGEKSLLFGPFAGFSPKFLKNGSYLDLVKSVKPNNMITMLSAGVKEFNLTKYLVSQLMLSNEERINDLRVFLPEAKDEDWEVITAGQRVQVIKDTDKSKGQLQFGTEVITSEDGSLAALLGASPGASTAVDIMFDVLQRCYKSEFKSWEPKIKEMVPSFGLKLSEHEDMYHSINEEVKKYLNVK.

Belongs to the MQO family. The cofactor is FAD.

It catalyses the reaction (S)-malate + a quinone = a quinol + oxaloacetate. The protein operates within carbohydrate metabolism; tricarboxylic acid cycle; oxaloacetate from (S)-malate (quinone route): step 1/1. The protein is Probable malate:quinone oxidoreductase 1 of Staphylococcus epidermidis (strain ATCC 12228 / FDA PCI 1200).